A 190-amino-acid polypeptide reads, in one-letter code: Small ribosomal subunit protein uS7 (190 aa).

T2 bears the N-acetylthreonine mark.

Belongs to the universal ribosomal protein uS7 family. As to quaternary structure, component of the small ribosomal subunit. Part of the small subunit (SSU) processome, composed of more than 70 proteins and the RNA chaperone small nucleolar RNA (snoRNA) U3.

It localises to the cytoplasm. It is found in the nucleus. The protein resides in the nucleolus. In terms of biological role, component of the small ribosomal subunit. The ribosome is a large ribonucleoprotein complex responsible for the synthesis of proteins in the cell. Part of the small subunit (SSU) processome, first precursor of the small eukaryotic ribosomal subunit. During the assembly of the SSU processome in the nucleolus, many ribosome biogenesis factors, an RNA chaperone and ribosomal proteins associate with the nascent pre-rRNA and work in concert to generate RNA folding, modifications, rearrangements and cleavage as well as targeted degradation of pre-ribosomal RNA by the RNA exosome. The chain is Small ribosomal subunit protein uS7 (rps5) from Dictyostelium discoideum (Social amoeba).